The primary structure comprises 953 residues: 26S proteasome non-ATPase regulatory subunit 1 (953 aa).

Met1 carries the N-acetylmethionine modification. Thr273 is subject to Phosphothreonine. The disordered stretch occupies residues 277–319 (SVPGSTNTGTVPGSEKDSDPMETEEKTASAVAGKTPDASPEPK). At Ser290 the chain carries Phosphoserine. Residues 290 to 303 (SEKDSDPMETEEKT) are compositionally biased toward basic and acidic residues. Lys310 is modified (N6-acetyllysine). At Thr311 the chain carries Phosphothreonine. Position 315 is a phosphoserine (Ser315). 10 PC repeats span residues 403–436 (TATASLGVIHKGHEKEALQLMATYLPKDTSPGSA), 441–474 (GGLYALGLIHANHGGDIIDYLLNQLKNASNDIVR), 476–510 (GGSLGLGLAAMGTARQDVYDLLKTNLYQDDAVTGE), 511–545 (AAGLALGLVMLGSKNAQAIEDMVGYAQETQHEKIL), 547–580 (GLAVGIALVMYGRMEEADALIESLCRDKDPILRR), 581–616 (SGMYTVAMAYCGSGNNKAIRRLLHVAVSDVNDDVRR), 617–649 (AAVESLGFILFRTPEQCPSVVSLLSESYNPHVR), 651–685 (GAAMALGICCAGTGNKEAINLLEPMTNDPVNYVRQ), 686–726 (GALI…DVMA), and 729–761 (GAILAQGILDAGGHNVTISLQSRTGHTHMPSVV). Lys720 carries the post-translational modification N6-acetyllysine. Position 830 is a phosphothreonine (Thr830). Ser834 carries the phosphoserine modification. 2 disordered regions span residues 839 to 881 (AKKK…LDNP) and 930 to 953 (AHGPKIEEEEQEPEPPEPFEYIDD). 2 stretches are compositionally biased toward basic and acidic residues: residues 842 to 852 (KEKEKEKKEEE) and 859 to 872 (AEKKEEKEKKKEPE). The segment covering 936 to 953 (EEEEQEPEPPEPFEYIDD) has biased composition (acidic residues).

The protein belongs to the proteasome subunit S1 family. Component of the 19S proteasome regulatory particle complex. The 26S proteasome consists of a 20S core particle (CP) and two 19S regulatory subunits (RP). The regulatory particle is made of a lid composed of 9 subunits, a base containing 6 ATPases and few additional components including PSMD1. Interacts with ADRM1. Interacts with ZFAND1.

In terms of biological role, component of the 26S proteasome, a multiprotein complex involved in the ATP-dependent degradation of ubiquitinated proteins. This complex plays a key role in the maintenance of protein homeostasis by removing misfolded or damaged proteins, which could impair cellular functions, and by removing proteins whose functions are no longer required. Therefore, the proteasome participates in numerous cellular processes, including cell cycle progression, apoptosis, or DNA damage repair. The protein is 26S proteasome non-ATPase regulatory subunit 1 (Psmd1) of Mus musculus (Mouse).